The following is an 89-amino-acid chain: Small ribosomal subunit protein uS14A (89 aa).

This sequence belongs to the universal ribosomal protein uS14 family. In terms of assembly, contacts proteins S3 and S10. Part of the 30S ribosomal subunit.

In terms of biological role, binds 16S rRNA, required for the assembly of 30S particles and may also be responsible for determining the conformation of the 16S rRNA at the A site. Functionally, non-essential protein. A second form of uS14, it can integrate into the 30S subunit where it partially compensates for loss of the major uS14 protein (AC P12878) in restoring 70S formation, although it does not seem to be incorporated into the ribosome as well as the major uS14. This Bacillus subtilis (strain 168) protein is Small ribosomal subunit protein uS14A.